The chain runs to 359 residues: Serpentine receptor class epsilon-33 (359 aa).

The next 7 membrane-spanning stretches (helical) occupy residues 29-49, 65-85, 134-156, 168-188, 194-214, 255-275, and 285-305; these read VIIS…VNVS, ILAL…FITI, YMYS…SVLI, PAIL…GLLF, LSAH…YVFV, LVFA…ALHY, and LIEN…MLSI.

It belongs to the nematode receptor-like protein sre family.

Its subcellular location is the membrane. In Caenorhabditis elegans, this protein is Serpentine receptor class epsilon-33 (sre-33).